A 397-amino-acid chain; its full sequence is Elongation factor Tu (397 aa).

A tr-type G domain is found at Lys-10–Glu-206. A G1 region spans residues Gly-19–Thr-26. Gly-19–Thr-26 contacts GTP. Thr-26 is a binding site for Mg(2+). Residues Gly-62–Ser-66 are G2. The tract at residues Asp-83–Gly-86 is G3. Residues Asp-83–His-87 and Asn-138–Asp-141 contribute to the GTP site. The G4 stretch occupies residues Asn-138 to Asp-141. The G5 stretch occupies residues Ser-176–Leu-178.

The protein belongs to the TRAFAC class translation factor GTPase superfamily. Classic translation factor GTPase family. EF-Tu/EF-1A subfamily. Monomer.

The protein resides in the cytoplasm. It carries out the reaction GTP + H2O = GDP + phosphate + H(+). Its function is as follows. GTP hydrolase that promotes the GTP-dependent binding of aminoacyl-tRNA to the A-site of ribosomes during protein biosynthesis. The polypeptide is Elongation factor Tu (Streptomyces cinnamoneus (Streptoverticillium cinnamoneum)).